A 45-amino-acid polypeptide reads, in one-letter code: Large ribosomal subunit protein bL36 (45 aa).

Residues 1–45 form a disordered region; that stretch reads MRVSSSIKADPSKGDKLVRRKGRLYVINKKDPNRKQRQAGPARKK.

It belongs to the bacterial ribosomal protein bL36 family.

This is Large ribosomal subunit protein bL36 from Chlamydia trachomatis serovar L2 (strain ATCC VR-902B / DSM 19102 / 434/Bu).